Reading from the N-terminus, the 298-residue chain is Probable phosphoserine phosphatase (298 aa).

Aspartate 82 (nucleophile) is an active-site residue. 2 residues coordinate Mg(2+): aspartate 82 and aspartate 84. Aspartate 84 (proton donor) is an active-site residue. Substrate is bound by residues glutamate 91, arginine 127, 170–171 (SG), and lysine 217. Position 240 (aspartate 240) interacts with Mg(2+). Asparagine 243 contributes to the substrate binding site.

This sequence belongs to the HAD-like hydrolase superfamily. SerB family. Mg(2+) serves as cofactor.

The enzyme catalyses O-phospho-L-serine + H2O = L-serine + phosphate. It carries out the reaction O-phospho-D-serine + H2O = D-serine + phosphate. The protein operates within amino-acid biosynthesis; L-serine biosynthesis; L-serine from 3-phospho-D-glycerate: step 3/3. The protein is Probable phosphoserine phosphatase of Schizosaccharomyces pombe (strain 972 / ATCC 24843) (Fission yeast).